Consider the following 166-residue polypeptide: Protein FAM163B (166 aa).

Residues 6-26 (VVITGGILATVILLCIIAVLC) form a helical membrane-spanning segment. At S40 the chain carries Phosphoserine.

It belongs to the FAM163 family.

Its subcellular location is the membrane. This chain is Protein FAM163B (FAM163B), found in Homo sapiens (Human).